The sequence spans 177 residues: Small ribosomal subunit protein uS5 (177 aa).

An S5 DRBM domain is found at 21-84 (LKEKMVSVNR…DEARQRMVRV (64 aa)).

This sequence belongs to the universal ribosomal protein uS5 family. In terms of assembly, part of the 30S ribosomal subunit. Contacts proteins S4 and S8.

Its function is as follows. With S4 and S12 plays an important role in translational accuracy. Functionally, located at the back of the 30S subunit body where it stabilizes the conformation of the head with respect to the body. The protein is Small ribosomal subunit protein uS5 of Nitrosomonas europaea (strain ATCC 19718 / CIP 103999 / KCTC 2705 / NBRC 14298).